A 164-amino-acid chain; its full sequence is CB1 cannabinoid receptor-interacting protein 1 (164 aa).

It belongs to the CNRIP family. As to quaternary structure, interacts with the cannabinoid receptor CNR1 (via C-terminus). Does not interact with cannabinoid receptor CNR2.

In terms of biological role, suppresses cannabinoid receptor CNR1-mediated tonic inhibition of voltage-gated calcium channels. The chain is CB1 cannabinoid receptor-interacting protein 1 (CNRIP1) from Bos taurus (Bovine).